Here is a 704-residue protein sequence, read N- to C-terminus: SH3KBP1-binding protein 1 (704 aa).

An N-acetylalanine modification is found at A2. The 70-residue stretch at 19–88 (EVIHLNVGGK…LRTKELDPRG (70 aa)) folds into the BTB domain. The disordered stretch occupies residues 146–165 (VGPQQIGGRPAPVRRSNTMP). T163 bears the Phosphothreonine mark. WD repeat units lie at residues 233–280 (RLDW…GGSE), 283–322 (VFHL…WQVQ), 324–359 (VQPI…LRMK), 428–466 (VHRS…GMIS), and 548–586 (LECE…DGLG). Residues 609-704 (PLASSRGSFP…LKKTLNETSF (96 aa)) are disordered. Residues 612–631 (SSRGSFPSPSPRTSLTSLHS) are compositionally biased toward low complexity. Residues 618 to 623 (PSPSPR) carry the PXXXPR motif. Phosphoserine is present on residues S644 and S646. The short motif at 678–683 (PTPAPR) is the PXXXPR element. At T693 the chain carries Phosphothreonine.

Belongs to the KCTD3 family. As to quaternary structure, monomer. Interacts with CUL3; interaction is direct and forms a 5:5 heterodecamer. Interacts (via PXXXPR motifs) with SH3KBP1 (via SH3 domains). Directly interacts with cathepsin B/CTSB.

It is found in the lysosome. Its function is as follows. Inhibits CBL-SH3KBP1 complex mediated down-regulation of EGFR signaling by sequestration of SH3KBP1. Binds to SH3KBP1 and prevents its interaction with CBL and inhibits translocation of SH3KBP1 to EGFR containing vesicles upon EGF stimulation. The polypeptide is SH3KBP1-binding protein 1 (Shkbp1) (Mus musculus (Mouse)).